The primary structure comprises 499 residues: Lysosomal Pro-X carboxypeptidase (499 aa).

The N-terminal stretch at methionine 1–alanine 21 is a signal peptide. Positions asparagine 22–threonine 47 are excised as a propeptide. Asparagine 103 is a glycosylation site (N-linked (GlcNAc...) asparagine). Catalysis depends on serine 181, which acts as the Charge relay system. The interval histidine 196–tyrosine 337 is SKS domain. Disulfide bonds link cysteine 217–cysteine 375, cysteine 235–cysteine 313, cysteine 266–cysteine 346, and cysteine 367–cysteine 397. N-linked (GlcNAc...) asparagine glycosylation occurs at asparagine 234. N-linked (GlcNAc...) asparagine glycans are attached at residues asparagine 339 and asparagine 348. The N-linked (GlcNAc...) asparagine glycan is linked to asparagine 418. Catalysis depends on charge relay system residues aspartate 433 and histidine 458.

The protein belongs to the peptidase S28 family. As to quaternary structure, homodimer.

Its subcellular location is the lysosome. It catalyses the reaction Cleavage of a -Pro-|-Xaa bond to release a C-terminal amino acid.. Functionally, cleaves C-terminal amino acids linked to proline in peptides such as angiotensin II, III and des-Arg9-bradykinin. This cleavage occurs at acidic pH, but enzymatic activity is retained with some substrates at neutral pH. This Bos taurus (Bovine) protein is Lysosomal Pro-X carboxypeptidase (PRCP).